A 103-amino-acid chain; its full sequence is MAVSKIRIKLKAYDHEVIDKTARSIVETAERTGAFVFGPVPLPTKRSRYTVIRGPFKDKDSREHFQLNTHKRLIDIQQPTPRTVDSLQRLDLPAGVNIEIKAT.

It belongs to the universal ribosomal protein uS10 family. Part of the 30S ribosomal subunit.

In terms of biological role, involved in the binding of tRNA to the ribosomes. The sequence is that of Small ribosomal subunit protein uS10 from Rubrobacter xylanophilus (strain DSM 9941 / JCM 11954 / NBRC 16129 / PRD-1).